Reading from the N-terminus, the 458-residue chain is Argininosuccinate lyase (458 aa).

The protein belongs to the lyase 1 family. Argininosuccinate lyase subfamily.

Its subcellular location is the cytoplasm. It carries out the reaction 2-(N(omega)-L-arginino)succinate = fumarate + L-arginine. It functions in the pathway amino-acid biosynthesis; L-arginine biosynthesis; L-arginine from L-ornithine and carbamoyl phosphate: step 3/3. The protein is Argininosuccinate lyase of Salmonella choleraesuis (strain SC-B67).